The primary structure comprises 84 residues: Translation initiation factor IF-1, chloroplastic (84 aa).

The S1-like domain occupies Met1–Arg72.

The protein belongs to the IF-1 family. As to quaternary structure, component of the 30S ribosomal translation pre-initiation complex which assembles on the 30S ribosome in the order IF-2 and IF-3, IF-1 and N-formylmethionyl-tRNA(fMet); mRNA recruitment can occur at any time during PIC assembly.

It localises to the plastid. The protein resides in the chloroplast. One of the essential components for the initiation of protein synthesis. Stabilizes the binding of IF-2 and IF-3 on the 30S subunit to which N-formylmethionyl-tRNA(fMet) subsequently binds. Helps modulate mRNA selection, yielding the 30S pre-initiation complex (PIC). Upon addition of the 50S ribosomal subunit IF-1, IF-2 and IF-3 are released leaving the mature 70S translation initiation complex. In Spirogyra maxima (Green alga), this protein is Translation initiation factor IF-1, chloroplastic.